The sequence spans 131 residues: Small ribosomal subunit protein uS9 (131 aa).

It belongs to the universal ribosomal protein uS9 family.

The sequence is that of Small ribosomal subunit protein uS9 from Actinobacillus pleuropneumoniae serotype 5b (strain L20).